Consider the following 312-residue polypeptide: HPr kinase/phosphorylase (312 aa).

Catalysis depends on residues His-139 and Lys-160. 154–161 (GSSGVGKS) serves as a coordination point for ATP. A Mg(2+)-binding site is contributed by Ser-161. The Proton acceptor; for phosphorylation activity. Proton donor; for dephosphorylation activity role is filled by Asp-178. The segment at 202–211 (LEIRGLGIIN) is important for the catalytic mechanism of both phosphorylation and dephosphorylation. Glu-203 contacts Mg(2+). Arg-244 is an active-site residue. The segment at 265 to 270 (PVRPGR) is important for the catalytic mechanism of dephosphorylation.

It belongs to the HPrK/P family. As to quaternary structure, homohexamer. Requires Mg(2+) as cofactor.

It catalyses the reaction [HPr protein]-L-serine + ATP = [HPr protein]-O-phospho-L-serine + ADP + H(+). The enzyme catalyses [HPr protein]-O-phospho-L-serine + phosphate + H(+) = [HPr protein]-L-serine + diphosphate. Functionally, catalyzes the ATP- as well as the pyrophosphate-dependent phosphorylation of a specific serine residue in HPr, a phosphocarrier protein of the phosphoenolpyruvate-dependent sugar phosphotransferase system (PTS). HprK/P also catalyzes the pyrophosphate-producing, inorganic phosphate-dependent dephosphorylation (phosphorolysis) of seryl-phosphorylated HPr (P-Ser-HPr). The two antagonistic activities of HprK/P are regulated by several intracellular metabolites, which change their concentration in response to the absence or presence of rapidly metabolisable carbon sources (glucose, fructose, etc.) in the growth medium. Therefore, by controlling the phosphorylation state of HPr, HPrK/P is a sensor enzyme that plays a major role in the regulation of carbon metabolism and sugar transport: it mediates carbon catabolite repression (CCR), and regulates PTS-catalyzed carbohydrate uptake and inducer exclusion. The chain is HPr kinase/phosphorylase from Listeria monocytogenes serotype 4b (strain CLIP80459).